The sequence spans 279 residues: tRNA pseudouridine synthase B (279 aa).

Aspartate 38 (nucleophile) is an active-site residue.

The protein belongs to the pseudouridine synthase TruB family. Type 1 subfamily.

The catalysed reaction is uridine(55) in tRNA = pseudouridine(55) in tRNA. In terms of biological role, responsible for synthesis of pseudouridine from uracil-55 in the psi GC loop of transfer RNAs. This is tRNA pseudouridine synthase B from Acholeplasma laidlawii (strain PG-8A).